Here is a 141-residue protein sequence, read N- to C-terminus: Hemoglobin subunit alpha (141 aa).

One can recognise a Globin domain in the interval V1–R141. Position 3 is a phosphoserine (S3). K7 and K11 each carry N6-succinyllysine. K16 carries the post-translational modification N6-acetyllysine; alternate. The residue at position 16 (K16) is an N6-succinyllysine; alternate. The residue at position 24 (Y24) is a Phosphotyrosine. K40 is subject to N6-succinyllysine. S49 carries the post-translational modification Phosphoserine. O2 is bound at residue H58. H87 serves as a coordination point for heme b. S102 is modified (phosphoserine). T108 carries the phosphothreonine modification. S124 is modified (phosphoserine). T134 and T137 each carry phosphothreonine. S138 is subject to Phosphoserine.

It belongs to the globin family. In terms of assembly, heterotetramer of two alpha chains and two beta chains. In terms of tissue distribution, red blood cells.

Its function is as follows. Involved in oxygen transport from the lung to the various peripheral tissues. In terms of biological role, hemopressin acts as an antagonist peptide of the cannabinoid receptor CNR1. Hemopressin-binding efficiently blocks cannabinoid receptor CNR1 and subsequent signaling. In Lama vicugna (Vicugna), this protein is Hemoglobin subunit alpha (HBA).